A 233-amino-acid polypeptide reads, in one-letter code: Protein TIPIN homolog (233 aa).

The span at 1 to 14 shows a compositional bias: acidic residues; that stretch reads MDEMEDFFENDELD. Disordered stretches follow at residues 1 to 39 and 134 to 233; these read MDEM…RVVE and GETG…NNDW. Composition is skewed to basic and acidic residues over residues 163–190 and 197–216; these read DLFK…KTAE and EEYR…AKEA. The segment covering 217–227 has biased composition (acidic residues); sequence ADEDALMEDFG.

The protein belongs to the CSM3 family.

Its subcellular location is the cytoplasm. The protein localises to the nucleus. Functionally, required for normal progression of S-phase. Important for cell survival after DNA damage or replication stress. The polypeptide is Protein TIPIN homolog (Caenorhabditis elegans).